A 166-amino-acid polypeptide reads, in one-letter code: Large ribosomal subunit protein uL10 (166 aa).

Belongs to the universal ribosomal protein uL10 family. As to quaternary structure, part of the ribosomal stalk of the 50S ribosomal subunit. The N-terminus interacts with L11 and the large rRNA to form the base of the stalk. The C-terminus forms an elongated spine to which L12 dimers bind in a sequential fashion forming a multimeric L10(L12)X complex.

Its function is as follows. Forms part of the ribosomal stalk, playing a central role in the interaction of the ribosome with GTP-bound translation factors. The polypeptide is Large ribosomal subunit protein uL10 (Shewanella sediminis (strain HAW-EB3)).